A 316-amino-acid chain; its full sequence is Small ribosomal subunit biogenesis GTPase RsgA (316 aa).

The CP-type G domain occupies 83-248 (DQYKSKLFAA…LIDSPGFQEF (166 aa)). GTP-binding positions include 131–134 (NKTD) and 185–193 (GQSGMGKST). Zn(2+) is bound by residues Cys272, Cys277, His279, and Cys285.

Belongs to the TRAFAC class YlqF/YawG GTPase family. RsgA subfamily. In terms of assembly, monomer. Associates with 30S ribosomal subunit, binds 16S rRNA. It depends on Zn(2+) as a cofactor.

Its subcellular location is the cytoplasm. Functionally, one of several proteins that assist in the late maturation steps of the functional core of the 30S ribosomal subunit. Helps release RbfA from mature subunits. May play a role in the assembly of ribosomal proteins into the subunit. Circularly permuted GTPase that catalyzes slow GTP hydrolysis, GTPase activity is stimulated by the 30S ribosomal subunit. The polypeptide is Small ribosomal subunit biogenesis GTPase RsgA (Paraburkholderia phytofirmans (strain DSM 17436 / LMG 22146 / PsJN) (Burkholderia phytofirmans)).